Here is a 146-residue protein sequence, read N- to C-terminus: 3-dehydroquinate dehydratase (146 aa).

Catalysis depends on Tyr-24, which acts as the Proton acceptor. Substrate-binding residues include Asn-75, His-81, and Asp-88. His-101 serves as the catalytic Proton donor. Substrate is bound by residues 102-103 and Arg-112; that span reads LS.

This sequence belongs to the type-II 3-dehydroquinase family. In terms of assembly, homododecamer.

The enzyme catalyses 3-dehydroquinate = 3-dehydroshikimate + H2O. It participates in metabolic intermediate biosynthesis; chorismate biosynthesis; chorismate from D-erythrose 4-phosphate and phosphoenolpyruvate: step 3/7. Its function is as follows. Catalyzes a trans-dehydration via an enolate intermediate. The polypeptide is 3-dehydroquinate dehydratase (Maricaulis maris (strain MCS10) (Caulobacter maris)).